A 429-amino-acid chain; its full sequence is Oxysterol-binding protein-like protein OBPalpha (429 aa).

The protein belongs to the OSBP family.

This chain is Oxysterol-binding protein-like protein OBPalpha (OBPALPHA), found in Candida albicans (strain SC5314 / ATCC MYA-2876) (Yeast).